The sequence spans 170 residues: MQMVINEMKQKAIYPGTFDPVTNGHIDIITRASTIFPELIVAVASNKNKRPYLSWESRISLLEESVGHLTGVRVVGFDNLLIDFVLEQNAGIILRGLRAVSDFEYEFQLAGMNRKLSKKVETLFLTPAEHLMYISSTLVREIAALNGDISQFVPPNVVRELKKRQNERSL.

A substrate-binding site is contributed by Thr17. ATP-binding positions include 17–18 (TF) and His25. Substrate-binding residues include Lys49, Leu81, and Arg95. ATP contacts are provided by residues 96 to 98 (GLR), Glu106, and 131 to 137 (LMYISST).

This sequence belongs to the bacterial CoaD family. In terms of assembly, homohexamer. It depends on Mg(2+) as a cofactor.

The protein localises to the cytoplasm. It catalyses the reaction (R)-4'-phosphopantetheine + ATP + H(+) = 3'-dephospho-CoA + diphosphate. It functions in the pathway cofactor biosynthesis; coenzyme A biosynthesis; CoA from (R)-pantothenate: step 4/5. Its function is as follows. Reversibly transfers an adenylyl group from ATP to 4'-phosphopantetheine, yielding dephospho-CoA (dPCoA) and pyrophosphate. The chain is Phosphopantetheine adenylyltransferase from Legionella pneumophila subsp. pneumophila (strain Philadelphia 1 / ATCC 33152 / DSM 7513).